The primary structure comprises 218 residues: MNLFSFLGDMLHLGSMLILLFKIKNDKSCAGVSLKSQILFTIVFTARYLDLFTNYVSLYITFMKITYIAVSYYTLHLIARKYKFTYDKDHDTFKIVYLIASCAILSLITYDKTTIGIYSTFLEILWTFSIYLESIAILPQLILLQRTGEVEALTSNYIVLLGGYRAFYLFNWIYRITFYNWSGKIEMLSGLLQTILYADFFYYYAKSRMYGKKLVLPQ.

The Lumenal portion of the chain corresponds to 1–2; sequence MN. A helical transmembrane segment spans residues 3 to 23; sequence LFSFLGDMLHLGSMLILLFKI. The Cytoplasmic portion of the chain corresponds to 24–57; it reads KNDKSCAGVSLKSQILFTIVFTARYLDLFTNYVS. The chain crosses the membrane as a helical span at residues 58–78; it reads LYITFMKITYIAVSYYTLHLI. The Lumenal portion of the chain corresponds to 79–94; it reads ARKYKFTYDKDHDTFK. Residues 95 to 115 traverse the membrane as a helical segment; the sequence is IVYLIASCAILSLITYDKTTI. Residues 116-123 are Cytoplasmic-facing; it reads GIYSTFLE. A helical membrane pass occupies residues 124 to 144; it reads ILWTFSIYLESIAILPQLILL. At 145–152 the chain is on the lumenal side; the sequence is QRTGEVEA. Residues 153–173 form a helical membrane-spanning segment; the sequence is LTSNYIVLLGGYRAFYLFNWI. Residues 174–184 are Cytoplasmic-facing; sequence YRITFYNWSGK. Residues 185–205 form a helical membrane-spanning segment; that stretch reads IEMLSGLLQTILYADFFYYYA. The Lumenal portion of the chain corresponds to 206–218; it reads KSRMYGKKLVLPQ.

This sequence belongs to the ERD2 family.

Its subcellular location is the endoplasmic reticulum membrane. Functionally, required for the retention of luminal endoplasmic reticulum proteins. Determines the specificity of the luminal ER protein retention system. Also required for normal vesicular traffic through the Golgi. This Dictyostelium discoideum (Social amoeba) protein is ER lumen protein-retaining receptor (kdelr).